We begin with the raw amino-acid sequence, 168 residues long: Large ribosomal subunit protein bL9 (168 aa).

Residues 149–168 form a disordered region; sequence QSFEEEPAPEAPAEEAEAAE. The segment covering 152-168 has biased composition (acidic residues); the sequence is EEEPAPEAPAEEAEAAE.

It belongs to the bacterial ribosomal protein bL9 family.

In terms of biological role, binds to the 23S rRNA. The chain is Large ribosomal subunit protein bL9 from Desulfovibrio desulfuricans (strain ATCC 27774 / DSM 6949 / MB).